Reading from the N-terminus, the 469-residue chain is MGKNIIEKIWDKHVVYQEEGKPDLLYIDLHLIHEVTSPQAFEGLRMNGRQVRRPDLSFATMDHNVPTKNLPTIHDPIARNQIETLAKNAEEFGVELAGMGHPDQGIVHVIGPELGLTQPGKTIVCGDSHTSTHGAFGAIAFGIGTSEVEHVLSTQTLWQNKPKTMEIRVEGELSVGVAAKDIILAIIAKFGIGVGTGYIVEFTGEAIHKLSMEERMTICNMSIEAGAKAGLISPDQITVDYIRGRKYAPQGEQFEEAANYWLSLASDEDATYDTVRIIHAEEIEPIITWGTNPSMGTGVSGHVPTLADYKDESDKAALQKALDYMGLEEGQPLTSIDIQHVFIGSCTNSRMSDLRAAANVIKGRKVHGDVTAIVVPGSYSTKKQAEAEGLDKIFIDAGFEWRESGCSMCLAMNDDVVPAGERCASTSNRNFEGRQGAGSRTHLVSPPMAAAAAIAGHFVDVREFVKETV.

C346, C406, and C409 together coordinate [4Fe-4S] cluster.

Belongs to the aconitase/IPM isomerase family. LeuC type 1 subfamily. Heterodimer of LeuC and LeuD. The cofactor is [4Fe-4S] cluster.

It catalyses the reaction (2R,3S)-3-isopropylmalate = (2S)-2-isopropylmalate. The protein operates within amino-acid biosynthesis; L-leucine biosynthesis; L-leucine from 3-methyl-2-oxobutanoate: step 2/4. Functionally, catalyzes the isomerization between 2-isopropylmalate and 3-isopropylmalate, via the formation of 2-isopropylmaleate. This is 3-isopropylmalate dehydratase large subunit from Lysinibacillus sphaericus (strain C3-41).